The primary structure comprises 365 residues: Peptidyl-prolyl cis-trans isomerase FKBP42 (365 aa).

Residues 1–15 (MDESLEHQTQTHDQE) are compositionally biased toward basic and acidic residues. The segment at 1–44 (MDESLEHQTQTHDQESEIVTEGSAVVHSEPSQEGNVPPKVDSEA) is disordered. An interaction with MDR1/PGP1 region spans residues 1 to 163 (MDESLEHQTQ…EVIGFDETKE (163 aa)). The region spanning 67–159 (YSTCFLHYRA…LYEVEVIGFD (93 aa)) is the PPIase FKBP-type domain. Positions 163–337 (EGKARSDMTV…GKDEGGAKSK (175 aa)) are interaction with MRP1. TPR repeat units lie at residues 179 to 212 (ADRRKMDGNSLFKEEKLEEAMQQYEMAIAYMGDD), 230 to 263 (NPCHLNIAACLIKLKRYDEAIGHCNIVLTEEEKN), and 264 to 297 (PKALFRRGKAKAELGQMDSARDDFRKAQKYAPDD). A calmodulin-binding region spans residues 310–326 (QEKALYQKQKEMYKGIF). A helical; Anchor for type IV membrane protein membrane pass occupies residues 338–357 (SLFWLIVLWQWFVSLFSRIF).

The protein belongs to the FKBP-type PPIase family. In terms of assembly, interacts with calmodulin (CaM), MRP1, MRP2, MDR1/PGP1, MDR11/PGP19 and SHD/HSP90. Interacts with 1-naphthylphthalamic acid (NPA).

Its subcellular location is the cell membrane. The protein resides in the vacuole membrane. It localises to the endoplasmic reticulum. The enzyme catalyses [protein]-peptidylproline (omega=180) = [protein]-peptidylproline (omega=0). In terms of biological role, PPIases accelerate the folding of proteins. It catalyzes the cis-trans isomerization of proline imidic peptide bonds in oligopeptides. Modulates the uptake of MRP substrates into the vacuole; reduces metolachlor-GS (MOC-GS) and enhances 17-beta-estradiol 17-(beta-D-glucuronide) (E(2)17betaG) uptake. Regulates cell elongation and orientation. Functions as a positive regulator of PGP1-mediated auxin transport. Confers drug modulation of PGP1 efflux activity as interaction with NPA or flavonol quercetin prevents its physical and functional interaction with PGP1. Required for the proper localization of auxin-related ABCB transporters. Plays a role in brassinosteroid (BR) signaling pathway. Required for seed development by promoting stamen elongation and, to a lesser extent, anther dehiscence and pollen maturation, probably as a chaperone helping ABCB1 and ABCB19 auxin transporters localization and activation. Involved in auxin signaling in nectaries to promote starch accumulation to attract visiting pollinators. The polypeptide is Peptidyl-prolyl cis-trans isomerase FKBP42 (Arabidopsis thaliana (Mouse-ear cress)).